We begin with the raw amino-acid sequence, 483 residues long: GTPase Der (483 aa).

2 EngA-type G domains span residues 3-167 and 212-387; these read FTLA…GEER and LRIA…EIWN. GTP-binding positions include 9–16, 56–60, 119–122, 218–225, 265–269, and 330–333; these read GRPNVGKS, DTAGL, NKAE, GRPNAGKS, DTAGM, and NKWD. The KH-like domain occupies 388–472; sequence RRISTGRLNR…PIRLSLRTSD (85 aa).

Belongs to the TRAFAC class TrmE-Era-EngA-EngB-Septin-like GTPase superfamily. EngA (Der) GTPase family. As to quaternary structure, associates with the 50S ribosomal subunit.

Its function is as follows. GTPase that plays an essential role in the late steps of ribosome biogenesis. This is GTPase Der from Brucella ovis (strain ATCC 25840 / 63/290 / NCTC 10512).